The sequence spans 426 residues: GATA type zinc finger protein asd-4 (426 aa).

A GATA-type zinc finger spans residues 16 to 40 (CQNCATSTTPLWRRDEMGQVLCNAC). 2 disordered regions span residues 70 to 143 (RPDL…NPHI) and 159 to 178 (PGFGVPTASPGRAPSPMNGE). The span at 104-113 (PNNPAAAARR) shows a compositional bias: low complexity. Polar residues predominate over residues 128–138 (SPVSRTGTPNV). The stretch at 182–292 (QTHEQLLAAN…QDNGRHKKIR (111 aa)) forms a coiled coil. Low complexity predominate over residues 306 to 318 (VEPQQPEQQQPAP). The interval 306–426 (VEPQQPEQQQ…PVEEAPKAES (121 aa)) is disordered. Pro residues predominate over residues 335–353 (APAPAPEAAPEQAPAPAPE). Over residues 354–419 (PVQEQAQEPE…SEPPTTAPVE (66 aa)) the composition is skewed to low complexity.

In terms of assembly, homotetramer.

The protein resides in the nucleus. In terms of biological role, transcriptional regulator that functions in sexual development; disruption of asd-4 gene results in agenesis of ascus and ascospore with macroscopically normal fruiting body formation. The GATA-type zinc finger domain binds to DNA sequences from its own promoter region. The chain is GATA type zinc finger protein asd-4 (asd-4) from Neurospora crassa (strain ATCC 24698 / 74-OR23-1A / CBS 708.71 / DSM 1257 / FGSC 987).